Consider the following 148-residue polypeptide: MADESNTGPVAAAEAVAETQAPAGKRKSSSRRQRTAAGQVAESKTTAKPKRYSETERADKLNLIEAEVAQGNSTLKDAIKSAGISEQTYYVWKKSAKPADRKPEESVVAGDDLADLIQLDKENLRLRNLLSDKLRAENAELRKRLGLD.

The interval 1–58 (MADESNTGPVAAAEAVAETQAPAGKRKSSSRRQRTAAGQVAESKTTAKPKRYSETERA) is disordered. Over residues 7–23 (TGPVAAAEAVAETQAPA) the composition is skewed to low complexity. Residues 24–34 (GKRKSSSRRQR) show a composition bias toward basic residues.

This sequence belongs to the SyrB family.

Its function is as follows. Responsible for the repression of SyrM activity. In Sinorhizobium fredii (strain NBRC 101917 / NGR234), this protein is Probable transcriptional regulator SyrB (syrB).